The sequence spans 245 residues: Biosynthetic peptidoglycan transglycosylase (245 aa).

Residues 29–49 (LLVAFLILSLVLVATVSVINP) traverse the membrane as a helical segment.

This sequence belongs to the glycosyltransferase 51 family.

Its subcellular location is the cell inner membrane. The catalysed reaction is [GlcNAc-(1-&gt;4)-Mur2Ac(oyl-L-Ala-gamma-D-Glu-L-Lys-D-Ala-D-Ala)](n)-di-trans,octa-cis-undecaprenyl diphosphate + beta-D-GlcNAc-(1-&gt;4)-Mur2Ac(oyl-L-Ala-gamma-D-Glu-L-Lys-D-Ala-D-Ala)-di-trans,octa-cis-undecaprenyl diphosphate = [GlcNAc-(1-&gt;4)-Mur2Ac(oyl-L-Ala-gamma-D-Glu-L-Lys-D-Ala-D-Ala)](n+1)-di-trans,octa-cis-undecaprenyl diphosphate + di-trans,octa-cis-undecaprenyl diphosphate + H(+). The protein operates within cell wall biogenesis; peptidoglycan biosynthesis. Peptidoglycan polymerase that catalyzes glycan chain elongation from lipid-linked precursors. This Shewanella amazonensis (strain ATCC BAA-1098 / SB2B) protein is Biosynthetic peptidoglycan transglycosylase.